A 222-amino-acid polypeptide reads, in one-letter code: Interleukin-12 subunit alpha (222 aa).

Positions 1-25 (MCPLRNLLLVATLVLLNHLDHLSLG) are cleaved as a signal peptide. Intrachain disulfides connect C40–C113, C67–C199, and C88–C126. N-linked (GlcNAc...) asparagine glycosylation is found at N42 and N96.

This sequence belongs to the IL-6 superfamily. As to quaternary structure, heterodimer with IL12B; disulfide-linked. This heterodimer is known as interleukin IL-12. Heterodimer with EBI3/IL27B; not disulfide-linked. This heterodimer is known as interleukin IL-35. Interacts with NBR1; this interaction promotes IL-12 secretion.

The protein resides in the secreted. In terms of biological role, heterodimerizes with IL12B to form the IL-12 cytokine or with EBI3/IL27B to form the IL-35 cytokine. IL-12 is primarily produced by professional antigen-presenting cells (APCs) such as B-cells and dendritic cells (DCs) as well as macrophages and granulocytes and regulates T-cell and natural killer-cell responses, induces the production of interferon-gamma (IFN-gamma), favors the differentiation of T-helper 1 (Th1) cells and is an important link between innate resistance and adaptive immunity. Mechanistically, exerts its biological effects through a receptor composed of IL12R1 and IL12R2 subunits. Binding to the receptor results in the rapid tyrosine phosphorylation of a number of cellular substrates including the JAK family kinases TYK2 and JAK2. In turn, recruited STAT4 gets phosphorylated and translocates to the nucleus where it regulates cytokine/growth factor responsive genes. As part of IL-35, plays essential roles in maintaining the immune homeostasis of the liver microenvironment and also functions as an immune-suppressive cytokine. Mediates biological events through unconventional receptors composed of IL12RB2 and gp130/IL6ST heterodimers or homodimers. Signaling requires the transcription factors STAT1 and STAT4, which form a unique heterodimer that binds to distinct DNA sites. This Sus scrofa (Pig) protein is Interleukin-12 subunit alpha (IL12A).